Consider the following 617-residue polypeptide: Zinc metalloproteinase nas-36 (617 aa).

The N-terminal stretch at 1-22 (MRLCHSIILFNSLISISICSKA) is a signal peptide. Positions 23–126 (DDPALLVASE…SKDKTKRLRR (104 aa)) are excised as a propeptide. The Peptidase M12A domain occupies 127–322 (SFVSDKTATW…VATINTAYCK (196 aa)). Cystine bridges form between C169-C321, C192-C211, C325-C346, C348-C357, C368-C397, C425-C445, C519-C550, C523-C555, and C535-C540. A glycan (N-linked (GlcNAc...) asparagine) is linked at N174. Residue H219 participates in Zn(2+) binding. Residue E220 is part of the active site. The Zn(2+) site is built by H223 and H229. Positions 317 to 358 (NTAYCKDECKSEKTKCENGGYMRPSKCSECLCPDGLGGEKCE) constitute an EGF-like domain. Residues 368–482 (CGGIIKLTEE…IGFKIQAKST (115 aa)) enclose the CUB domain. Residues 507 to 556 (PNVWADWGEWSMCSRTCGGCGIRSRVRSCRSKKCEGRRQEFGTCNLKACP) form the TSP type-1 domain.

Zn(2+) serves as cofactor. Expressed in hypodermal cells. Also detected in the hypodermal seam cells in L4 larvae and young adults. In old adult hermaphrodites, it localizes to the vulva (at protein level).

The protein localises to the secreted. Metalloprotease. Involved in molting, a process during larval stages in which a new cuticle is formed and the old cuticle is shed. The chain is Zinc metalloproteinase nas-36 (nas-36) from Caenorhabditis elegans.